Here is a 379-residue protein sequence, read N- to C-terminus: MNALHFGAGNIGRGFIGKLLADSGVFVTFADINQTQIDQINQNKQYGVKIVGDASRVEVVKNIAAINSKDEEAVIEQVKSVELITTAVGPNVLGFIAPLFAKALAARLEAGNTQPLNIIACENMVRGTSFFKAKIFENLTASQQAEIEKFVGFVDSAVDRIVPPAELNEADPLEVTVEEFSEWIVDKTQFKGQIPDIKGMELTDNLMAFVERKLFTLNTGHLISAYLGKQAGVKWIKEAIAIDSVKAAVKATMEESGAVLIKRYNFDPQAHAAYIEKILKRFANPYLNDDVNRVGREPIRKLSPNDRLIKPLLGTLEYGLPHKNLVNGVVMALQYRNEEDPQAVELAQFIADNGVAAAVEKYTGLTNQEVIDQVVALYN.

Ala3–Gly14 is a binding site for NAD(+).

This sequence belongs to the mannitol dehydrogenase family.

It catalyses the reaction D-mannitol 1-phosphate + NAD(+) = beta-D-fructose 6-phosphate + NADH + H(+). The polypeptide is Mannitol-1-phosphate 5-dehydrogenase (Actinobacillus pleuropneumoniae serotype 3 (strain JL03)).